The following is a 345-amino-acid chain: MMSKKMKVLVVDDSPVFRALLSEIINSDPQLEVIGAAEDPYQAREMIKALKPDVLTLDIEMPKMNGVQFLKNLMRLHPLPVVMISTLTQHGADATLMALELGAVDYFPKPSVANTADMLGYRSLVNEKIRMAAQAQVGANQSMSPAVASSSAVSTSQYQLIAIGASTGGTEAVKHLLSALPASMPPIVITQHISAMFSGPFASRLDASCALSVSELTQGEVALKANHAYVAPGDKHLMVFRRGGQLYAHLDDSPAVNRHKPSVDVMFGSVAESLKGKAIGVILTGMGKDGAQGMLQMKQQGAITVAQDEQSCVVYGMPRAAVECGAAMHIKPLNKLPQFLCDLLS.

Residues 7–124 (KVLVVDDSPV…TADMLGYRSL (118 aa)) enclose the Response regulatory domain. Aspartate 58 is subject to 4-aspartylphosphate. Positions 154–345 (STSQYQLIAI…LPQFLCDLLS (192 aa)) constitute a CheB-type methylesterase domain. Active-site residues include serine 166, histidine 192, and aspartate 289.

It belongs to the CheB family. Post-translationally, phosphorylated by CheA. Phosphorylation of the N-terminal regulatory domain activates the methylesterase activity.

The protein resides in the cytoplasm. The catalysed reaction is [protein]-L-glutamate 5-O-methyl ester + H2O = L-glutamyl-[protein] + methanol + H(+). It catalyses the reaction L-glutaminyl-[protein] + H2O = L-glutamyl-[protein] + NH4(+). Involved in chemotaxis. Part of a chemotaxis signal transduction system that modulates chemotaxis in response to various stimuli. Catalyzes the demethylation of specific methylglutamate residues introduced into the chemoreceptors (methyl-accepting chemotaxis proteins or MCP) by CheR. Also mediates the irreversible deamidation of specific glutamine residues to glutamic acid. This is Protein-glutamate methylesterase/protein-glutamine glutaminase 2 from Vibrio vulnificus (strain YJ016).